The chain runs to 217 residues: Large ribosomal subunit protein uL3 (217 aa).

This sequence belongs to the universal ribosomal protein uL3 family. As to quaternary structure, part of the 50S ribosomal subunit. Forms a cluster with proteins L14 and L19.

Its function is as follows. One of the primary rRNA binding proteins, it binds directly near the 3'-end of the 23S rRNA, where it nucleates assembly of the 50S subunit. This is Large ribosomal subunit protein uL3 from Brachyspira hyodysenteriae (strain ATCC 49526 / WA1).